The primary structure comprises 151 residues: Glutamate mutase sigma subunit 1 (151 aa).

Residues 7–140 form the B12-binding domain; that stretch reads PRTVILGVIG…EMLREDLQLT (134 aa). Residues 17-21, histidine 20, 65-67, and 96-100 contribute to the adenosylcob(III)alamin site; these read SDAHV, SSL, and NLAVG.

This sequence belongs to the methylaspartate mutase GlmS subunit family. In terms of assembly, heterotetramer composed of 2 epsilon subunits (GlmE) and 2 sigma subunits (GlmS). GlmE exists as a homodimer and GlmS as a monomer. Adenosylcob(III)alamin serves as cofactor.

It carries out the reaction (2S,3S)-3-methyl-L-aspartate = L-glutamate. It participates in amino-acid degradation; L-glutamate degradation via mesaconate pathway; acetate and pyruvate from L-glutamate: step 1/4. Catalyzes the carbon skeleton rearrangement of L-glutamate to L-threo-3-methylaspartate ((2S,3S)-3-methylaspartate). The polypeptide is Glutamate mutase sigma subunit 1 (Haloarcula marismortui (strain ATCC 43049 / DSM 3752 / JCM 8966 / VKM B-1809) (Halobacterium marismortui)).